Here is a 402-residue protein sequence, read N- to C-terminus: DNA replication and repair protein RecF (402 aa).

Glycine 30–threonine 37 contacts ATP.

The protein belongs to the RecF family.

It localises to the cytoplasm. In terms of biological role, the RecF protein is involved in DNA metabolism; it is required for DNA replication and normal SOS inducibility. RecF binds preferentially to single-stranded, linear DNA. It also seems to bind ATP. The chain is DNA replication and repair protein RecF from Pseudarthrobacter chlorophenolicus (strain ATCC 700700 / DSM 12829 / CIP 107037 / JCM 12360 / KCTC 9906 / NCIMB 13794 / A6) (Arthrobacter chlorophenolicus).